The sequence spans 127 residues: uncharacterized protein (127 aa).

Positions 1 to 16 (MLKKIIFGITISLTTG) are cleaved as a signal peptide. C17 is lipidated: N-palmitoyl cysteine. C17 is lipidated: S-diacylglycerol cysteine. Positions 56–101 (EVREEIQKYRVEIVDINKKKRELYNRLSKEAQSFLAEQQKYKQKLS) form a coiled coil. A disordered region spans residues 102 to 127 (IPKLLIENDPKNNTANSKDNNDKDMK).

Its subcellular location is the cell membrane. This is an uncharacterized protein from Rickettsia prowazekii (strain Madrid E).